The following is a 276-amino-acid chain: Zinc transporter ZTP29 (276 aa).

Topologically, residues 1 to 6 (MDSQML) are cytoplasmic. Residues 7–27 (VALGLSLVGGLSTSLGALFVV) form a helical membrane-spanning segment. The Lumenal segment spans residues 28 to 35 (LSETPNMK). The helical transmembrane segment at 36–56 (MLGLLQGFASGLMLSISFLDL) threads the bilayer. At 57–63 (AHNAINS) the chain is on the cytoplasmic side. Residues 64–84 (IGFFKANLWFFGGVIFFACIT) form a helical membrane-spanning segment. Over 85–123 (KFIPEPTLGPSTDGKRRKKNGDEGGKDMMKKHRKQVLYS) the chain is Lumenal. Residues 124–144 (GLITAIGISLHNFPEGMAVFL) form a helical membrane-spanning segment. Topologically, residues 145–156 (GSIKGMRVGVNL) are cytoplasmic. A helical membrane pass occupies residues 157–177 (ALAIALHNIPEGVAVALPIYF). Over 178–187 (ATESKWQAFK) the chain is Lumenal. Residues 188 to 208 (LATLSGLAEPLGVIIVAYLFP) form a helical membrane-spanning segment. The Cytoplasmic segment spans residues 209–219 (RSLSPEILEGL). A helical transmembrane segment spans residues 220–240 (LGAVGGIMAFLTLHEMLPLAF). At 241 to 250 (DYAGQKQAVK) the chain is on the lumenal side. A helical membrane pass occupies residues 251-271 (AVFFGMACMSASLYFLELSLP). The Cytoplasmic segment spans residues 272-276 (ETMSL).

It belongs to the ZIP transporter (TC 2.A.5) family. ZupT subfamily. As to expression, expressed in hypocotyls, cotyledons, leaves and anthers.

The protein resides in the endoplasmic reticulum membrane. Its function is as follows. Zinc transporter involved response to salt stress. May act through the regulation of zinc levels required to induce the unfolded protein response (UPR) pathway. This is Zinc transporter ZTP29 (ZTP29) from Arabidopsis thaliana (Mouse-ear cress).